The chain runs to 106 residues: Cell division topological specificity factor (106 aa).

The protein belongs to the MinE family.

Prevents the cell division inhibition by proteins MinC and MinD at internal division sites while permitting inhibition at polar sites. This ensures cell division at the proper site by restricting the formation of a division septum at the midpoint of the long axis of the cell. The protein is Cell division topological specificity factor of Prochlorococcus marinus subsp. pastoris (strain CCMP1986 / NIES-2087 / MED4).